Consider the following 278-residue polypeptide: Tryptophan synthase alpha chain (278 aa).

Catalysis depends on proton acceptor residues glutamate 49 and aspartate 60.

Belongs to the TrpA family. In terms of assembly, tetramer of two alpha and two beta chains.

The catalysed reaction is (1S,2R)-1-C-(indol-3-yl)glycerol 3-phosphate + L-serine = D-glyceraldehyde 3-phosphate + L-tryptophan + H2O. The protein operates within amino-acid biosynthesis; L-tryptophan biosynthesis; L-tryptophan from chorismate: step 5/5. The alpha subunit is responsible for the aldol cleavage of indoleglycerol phosphate to indole and glyceraldehyde 3-phosphate. In Granulibacter bethesdensis (strain ATCC BAA-1260 / CGDNIH1), this protein is Tryptophan synthase alpha chain.